Consider the following 416-residue polypeptide: Subtilisin-like protease 12 (416 aa).

An N-terminal signal peptide occupies residues 1-19 (MSILKMMLIYFAIFWVVNA). The propeptide occupies 20-116 (AQLLDIDSQG…VEPNKEMQVA (97 aa)). The region spanning 35 to 115 (YIVVMKDRVS…FVEPNKEMQV (81 aa)) is the Inhibitor I9 domain. N-linked (GlcNAc...) asparagine glycosylation is found at Asn-123, Asn-136, and Asn-150. Positions 125 to 416 (TWGLSRISHK…NKLLYNGSGA (292 aa)) constitute a Peptidase S8 domain. Active-site charge relay system residues include Asp-157 and His-188. 4 N-linked (GlcNAc...) asparagine glycosylation sites follow: Asn-249, Asn-305, Asn-334, and Asn-353. Ser-362 (charge relay system) is an active-site residue. Residues Asn-404 and Asn-412 are each glycosylated (N-linked (GlcNAc...) asparagine).

Belongs to the peptidase S8 family.

It is found in the secreted. Its function is as follows. Secreted subtilisin-like serine protease with keratinolytic activity that contributes to pathogenicity. The polypeptide is Subtilisin-like protease 12 (SUB12) (Arthroderma benhamiae (strain ATCC MYA-4681 / CBS 112371) (Trichophyton mentagrophytes)).